A 279-amino-acid chain; its full sequence is 3-methyl-2-oxobutanoate hydroxymethyltransferase 2 (279 aa).

2 residues coordinate Mg(2+): Asp58 and Asp97. Residues 58–59 (DS), Asp97, and Lys126 contribute to the 3-methyl-2-oxobutanoate site. A Mg(2+)-binding site is contributed by Glu128. Catalysis depends on Glu195, which acts as the Proton acceptor.

Belongs to the PanB family. In terms of assembly, homodecamer; pentamer of dimers. Requires Mg(2+) as cofactor.

The protein resides in the cytoplasm. The catalysed reaction is 3-methyl-2-oxobutanoate + (6R)-5,10-methylene-5,6,7,8-tetrahydrofolate + H2O = 2-dehydropantoate + (6S)-5,6,7,8-tetrahydrofolate. It functions in the pathway cofactor biosynthesis; (R)-pantothenate biosynthesis; (R)-pantoate from 3-methyl-2-oxobutanoate: step 1/2. Functionally, catalyzes the reversible reaction in which hydroxymethyl group from 5,10-methylenetetrahydrofolate is transferred onto alpha-ketoisovalerate to form ketopantoate. This Methylibium petroleiphilum (strain ATCC BAA-1232 / LMG 22953 / PM1) protein is 3-methyl-2-oxobutanoate hydroxymethyltransferase 2.